The primary structure comprises 345 residues: Molybdate/tungstate import ATP-binding protein WtpC (345 aa).

In terms of domain architecture, ABC transporter spans 2–231 (LKVESISKDY…PKSEEVARFL (230 aa)). Residue 33–40 (GPSGSGKT) coordinates ATP. A Mop domain is found at 280–345 (KTSARNVFKA…FKASAIHVFP (66 aa)).

This sequence belongs to the ABC transporter superfamily. Sulfate/tungstate importer (TC 3.A.1.6) family. The complex is composed of two ATP-binding proteins (WtpC), two transmembrane proteins (WtpB) and a solute-binding protein (WtpA).

Its subcellular location is the cell membrane. The catalysed reaction is tungstate(in) + ATP + H2O = tungstate(out) + ADP + phosphate + H(+). Its function is as follows. Part of the ABC transporter complex WtpABC involved in molybdate/tungstate import. Responsible for energy coupling to the transport system. The chain is Molybdate/tungstate import ATP-binding protein WtpC (wtpC) from Pyrococcus horikoshii (strain ATCC 700860 / DSM 12428 / JCM 9974 / NBRC 100139 / OT-3).